Reading from the N-terminus, the 478-residue chain is Cytochrome c-552 (478 aa).

The signal sequence occupies residues 1 to 26 (MARKTLRARRFFSLIFPFFFITSVYA). Residue H94 participates in heme c binding. Positions 122, 125, and 126 each coordinate heme. Heme c is bound by residues C160, C163, H164, C209, C212, and H213. Residues E215, Y216, K261, and Q263 each coordinate Ca(2+). Residue Y216 coordinates substrate. Position 264 (H264) interacts with substrate. Positions 275, 282, 285, 286, 301, 314, 317, 318, and 393 each coordinate heme c.

Belongs to the cytochrome c-552 family. The cofactor is Ca(2+). Heme c serves as cofactor.

Its subcellular location is the periplasm. The catalysed reaction is 6 Fe(III)-[cytochrome c] + NH4(+) + 2 H2O = 6 Fe(II)-[cytochrome c] + nitrite + 8 H(+). It participates in nitrogen metabolism; nitrate reduction (assimilation). In terms of biological role, catalyzes the reduction of nitrite to ammonia, consuming six electrons in the process. This is Cytochrome c-552 from Salmonella dublin (strain CT_02021853).